An 888-amino-acid chain; its full sequence is DNA mismatch repair protein MutS (888 aa).

Residues 249–271 form a disordered region; the sequence is IGQRPPLSPPSREASGSTMAIDP. 638–645 serves as a coordination point for ATP; the sequence is GPNMAGKS.

It belongs to the DNA mismatch repair MutS family.

Its function is as follows. This protein is involved in the repair of mismatches in DNA. It is possible that it carries out the mismatch recognition step. This protein has a weak ATPase activity. The chain is DNA mismatch repair protein MutS from Nitrobacter winogradskyi (strain ATCC 25391 / DSM 10237 / CIP 104748 / NCIMB 11846 / Nb-255).